The sequence spans 87 residues: U3-theraphotoxin-Hhn1a 5 (87 aa).

A signal peptide spans 1-24; it reads MVNMKASMFLTFAGLVLLFVVCYA. Residues 25 to 52 constitute a propeptide that is removed on maturation; it reads SESEEKEFPKEMLSSIFAVDNDFKQEER. 3 cysteine pairs are disulfide-bonded: cysteine 54–cysteine 67, cysteine 61–cysteine 72, and cysteine 66–cysteine 79.

The protein belongs to the neurotoxin 10 (Hwtx-1) family. 51 (Hntx-8) subfamily. Hntx-8 sub-subfamily. In terms of tissue distribution, expressed by the venom gland.

It localises to the secreted. Functionally, ion channel inhibitor. The sequence is that of U3-theraphotoxin-Hhn1a 5 from Cyriopagopus hainanus (Chinese bird spider).